Reading from the N-terminus, the 266-residue chain is Metallo-beta-lactamase domain-containing protein 1 (266 aa).

A disordered region spans residues 48-71; that stretch reads LPQTRGPASSHRESPRGSGGAEAA. 7 residues coordinate Zn(2+): His114, His116, Asp118, His119, His169, Asp192, and His231. The segment at 229-266 is disordered; that stretch reads PGHGPPFRVLREASQPETEGGGNSQQEPVVGDEEPALH.

The protein belongs to the metallo-beta-lactamase superfamily. Glyoxalase II family. In terms of assembly, homodimer. Requires Zn(2+) as cofactor.

It is found in the cytoplasm. Its subcellular location is the cytosol. The protein localises to the nucleus. It carries out the reaction a ribonucleotidyl-ribonucleotide-RNA + H2O = a 3'-end ribonucleotide-RNA + a 5'-end 5'-phospho-ribonucleoside-RNA + H(+). Functionally, endoribonuclease that catalyzes the hydrolysis of histone-coding pre-mRNA 3'-end. Involved in histone pre-mRNA processing during the S-phase of the cell cycle, which is required for entering/progressing through S-phase. Cleaves histone pre-mRNA at a major and a minor cleavage site after the 5'-ACCCA-3' and the 5'-ACCCACA-3' sequence, respectively, and located downstream of the stem-loop. May require the presence of the HDE element located at the histone pre-RNA 3'-end to avoid non-specific cleavage. In Homo sapiens (Human), this protein is Metallo-beta-lactamase domain-containing protein 1.